A 229-amino-acid polypeptide reads, in one-letter code: Enolase-phosphatase E1 (229 aa).

Belongs to the HAD-like hydrolase superfamily. MasA/MtnC family. As to quaternary structure, monomer. The cofactor is Mg(2+).

It carries out the reaction 5-methylsulfanyl-2,3-dioxopentyl phosphate + H2O = 1,2-dihydroxy-5-(methylsulfanyl)pent-1-en-3-one + phosphate. Its pathway is amino-acid biosynthesis; L-methionine biosynthesis via salvage pathway; L-methionine from S-methyl-5-thio-alpha-D-ribose 1-phosphate: step 3/6. The protein operates within amino-acid biosynthesis; L-methionine biosynthesis via salvage pathway; L-methionine from S-methyl-5-thio-alpha-D-ribose 1-phosphate: step 4/6. Bifunctional enzyme that catalyzes the enolization of 2,3-diketo-5-methylthiopentyl-1-phosphate (DK-MTP-1-P) into the intermediate 2-hydroxy-3-keto-5-methylthiopentenyl-1-phosphate (HK-MTPenyl-1-P), which is then dephosphorylated to form the acireductone 1,2-dihydroxy-3-keto-5-methylthiopentene (DHK-MTPene). This Yersinia pseudotuberculosis serotype IB (strain PB1/+) protein is Enolase-phosphatase E1.